Consider the following 187-residue polypeptide: Elongation factor P (187 aa).

This sequence belongs to the elongation factor P family.

The protein localises to the cytoplasm. The protein operates within protein biosynthesis; polypeptide chain elongation. In terms of biological role, involved in peptide bond synthesis. Stimulates efficient translation and peptide-bond synthesis on native or reconstituted 70S ribosomes in vitro. Probably functions indirectly by altering the affinity of the ribosome for aminoacyl-tRNA, thus increasing their reactivity as acceptors for peptidyl transferase. In Desulfosudis oleivorans (strain DSM 6200 / JCM 39069 / Hxd3) (Desulfococcus oleovorans), this protein is Elongation factor P.